The following is a 109-amino-acid chain: Cell division suppressor protein YneA (109 aa).

Residues S40–I94 enclose the LysM domain.

This sequence belongs to the YneA family.

The protein localises to the cytoplasm. Its function is as follows. Inhibits cell division during the SOS response. Affects a later stage of the cell division protein assembly, after the assembly of the Z ring, by probably suppressing recruitment of FtsL and/or DivIC to the division machinery. The polypeptide is Cell division suppressor protein YneA (Priestia megaterium (strain DSM 319 / IMG 1521) (Bacillus megaterium)).